A 119-amino-acid polypeptide reads, in one-letter code: Large ribosomal subunit protein uL18 (119 aa).

This sequence belongs to the universal ribosomal protein uL18 family. In terms of assembly, part of the 50S ribosomal subunit; part of the 5S rRNA/L5/L18/L25 subcomplex. Contacts the 5S and 23S rRNAs.

Its function is as follows. This is one of the proteins that bind and probably mediate the attachment of the 5S RNA into the large ribosomal subunit, where it forms part of the central protuberance. The sequence is that of Large ribosomal subunit protein uL18 from Anaeromyxobacter sp. (strain Fw109-5).